The primary structure comprises 83 residues: uncharacterized protein (83 aa).

Positions 15-36 (RLKNGRGNKTMSESDYNTSDSG) are disordered. Positions 21–35 (GNKTMSESDYNTSDS) are enriched in polar residues.

This is an uncharacterized protein from Aedes vexans (Inland floodwater mosquito).